The sequence spans 120 residues: NAD(P)H-quinone oxidoreductase subunit 3 (120 aa).

3 helical membrane-spanning segments follow: residues 11 to 31, 64 to 84, and 89 to 109; these read LIFL…SYLI, MFAL…PWAV, and LGLL…VALV.

It belongs to the complex I subunit 3 family. As to quaternary structure, NDH-1 can be composed of about 15 different subunits; different subcomplexes with different compositions have been identified which probably have different functions.

It is found in the cell inner membrane. The catalysed reaction is a plastoquinone + NADH + (n+1) H(+)(in) = a plastoquinol + NAD(+) + n H(+)(out). The enzyme catalyses a plastoquinone + NADPH + (n+1) H(+)(in) = a plastoquinol + NADP(+) + n H(+)(out). Functionally, NDH-1 shuttles electrons from an unknown electron donor, via FMN and iron-sulfur (Fe-S) centers, to quinones in the respiratory and/or the photosynthetic chain. The immediate electron acceptor for the enzyme in this species is believed to be plastoquinone. Couples the redox reaction to proton translocation, and thus conserves the redox energy in a proton gradient. Cyanobacterial NDH-1 also plays a role in inorganic carbon-concentration. This is NAD(P)H-quinone oxidoreductase subunit 3 from Gloeobacter violaceus (strain ATCC 29082 / PCC 7421).